The chain runs to 289 residues: Elongation factor Ts (289 aa).

The interval 80-83 (TDFV) is involved in Mg(2+) ion dislocation from EF-Tu.

Belongs to the EF-Ts family.

The protein resides in the cytoplasm. Functionally, associates with the EF-Tu.GDP complex and induces the exchange of GDP to GTP. It remains bound to the aminoacyl-tRNA.EF-Tu.GTP complex up to the GTP hydrolysis stage on the ribosome. The sequence is that of Elongation factor Ts from Francisella tularensis subsp. tularensis (strain FSC 198).